Consider the following 36-residue polypeptide: Photosystem II reaction center protein M (36 aa).

The chain crosses the membrane as a helical span at residues 5-25 (ILGLIATALFIIIPTSFLLIL).

This sequence belongs to the PsbM family. In terms of assembly, PSII is composed of 1 copy each of membrane proteins PsbA, PsbB, PsbC, PsbD, PsbE, PsbF, PsbH, PsbI, PsbJ, PsbK, PsbL, PsbM, PsbT, PsbX, PsbY, PsbZ, Psb30/Ycf12, at least 3 peripheral proteins of the oxygen-evolving complex and a large number of cofactors. It forms dimeric complexes.

Its subcellular location is the plastid. It localises to the chloroplast thylakoid membrane. Its function is as follows. One of the components of the core complex of photosystem II (PSII). PSII is a light-driven water:plastoquinone oxidoreductase that uses light energy to abstract electrons from H(2)O, generating O(2) and a proton gradient subsequently used for ATP formation. It consists of a core antenna complex that captures photons, and an electron transfer chain that converts photonic excitation into a charge separation. This subunit is found at the monomer-monomer interface. This Chlorokybus atmophyticus (Soil alga) protein is Photosystem II reaction center protein M.